We begin with the raw amino-acid sequence, 35 residues long: uncharacterized protein (35 aa).

A helical membrane pass occupies residues 14–34 (VVVLLAICGAMLLLRWAAMIW).

The protein resides in the membrane. This is an uncharacterized protein from Escherichia coli (strain K12).